Consider the following 218-residue polypeptide: Phosphatidylserine decarboxylase proenzyme (218 aa).

The Schiff-base intermediate with substrate; via pyruvic acid role is filled by Ser-187. At Ser-187 the chain carries Pyruvic acid (Ser); by autocatalysis.

This sequence belongs to the phosphatidylserine decarboxylase family. PSD-A subfamily. In terms of assembly, heterodimer of a large membrane-associated beta subunit and a small pyruvoyl-containing alpha subunit. It depends on pyruvate as a cofactor. Post-translationally, is synthesized initially as an inactive proenzyme. Formation of the active enzyme involves a self-maturation process in which the active site pyruvoyl group is generated from an internal serine residue via an autocatalytic post-translational modification. Two non-identical subunits are generated from the proenzyme in this reaction, and the pyruvate is formed at the N-terminus of the alpha chain, which is derived from the carboxyl end of the proenzyme. The post-translation cleavage follows an unusual pathway, termed non-hydrolytic serinolysis, in which the side chain hydroxyl group of the serine supplies its oxygen atom to form the C-terminus of the beta chain, while the remainder of the serine residue undergoes an oxidative deamination to produce ammonia and the pyruvoyl prosthetic group on the alpha chain.

The protein resides in the cell membrane. The catalysed reaction is a 1,2-diacyl-sn-glycero-3-phospho-L-serine + H(+) = a 1,2-diacyl-sn-glycero-3-phosphoethanolamine + CO2. The protein operates within phospholipid metabolism; phosphatidylethanolamine biosynthesis; phosphatidylethanolamine from CDP-diacylglycerol: step 2/2. In terms of biological role, catalyzes the formation of phosphatidylethanolamine (PtdEtn) from phosphatidylserine (PtdSer). The chain is Phosphatidylserine decarboxylase proenzyme from Geobacter sulfurreducens (strain ATCC 51573 / DSM 12127 / PCA).